A 536-amino-acid chain; its full sequence is ATPase expression protein 3 (536 aa).

PPR repeat units lie at residues 212–246 and 386–421; these read TTTM…KKTP and TTGS…GVTP.

It localises to the mitochondrion inner membrane. In terms of biological role, required for respiration. In Eremothecium gossypii (strain ATCC 10895 / CBS 109.51 / FGSC 9923 / NRRL Y-1056) (Yeast), this protein is ATPase expression protein 3 (AEP3).